A 504-amino-acid polypeptide reads, in one-letter code: Probable ergothioneine transporter EgtUBC (504 aa).

One can recognise an ABC transmembrane type-1 domain in the interval 19-198 (MIEHIQISFI…LLAIIFDLIL (180 aa)). 6 helical membrane passes run 25–45 (ISFIALLIATAIAVPLGILLT), 49–69 (TISEIVMNIAAILQTIPSLAL), 70–90 (LGLMIPLFGIGRVPAIIALVV), 145–165 (AMVLIIGTATLAALIGAGGLG), 178–198 (SLILLGAIPAALLAIIFDLIL), and 209–229 (LLMTLGVIVMIIILAIAIPMF). The tract at residues 231–504 (QKGDKITLAG…DYLKAKGLIK (274 aa)) is ergothioneine binding domain.

This sequence in the N-terminal section; belongs to the binding-protein-dependent transport system permease family. The protein in the C-terminal section; belongs to the OsmX family. As to quaternary structure, the complex is probably composed of at least an ATP-binding protein (EgtUA) and a transmembrane protein (EgtUBC).

The protein localises to the membrane. Its function is as follows. Part of an ABC transporter complex EgtU required for the uptake of ergothioneine (EGT), a natural low-molecular weight (LMW) thiol antioxidant. Responsible for the translocation of the substrate across the membrane. Also contains a C-terminal periplasmic solute-binding domain (SBD) which binds to EGT with sub-micromolar affinity. Probably does not bind L-hercynine. This Staphylococcus aureus (strain USA300) protein is Probable ergothioneine transporter EgtUBC (egtUBC).